Reading from the N-terminus, the 384-residue chain is Anhydro-N-acetylmuramic acid kinase (384 aa).

12–19 (GTSLDGVD) contributes to the ATP binding site.

The protein belongs to the anhydro-N-acetylmuramic acid kinase family.

It catalyses the reaction 1,6-anhydro-N-acetyl-beta-muramate + ATP + H2O = N-acetyl-D-muramate 6-phosphate + ADP + H(+). It functions in the pathway amino-sugar metabolism; 1,6-anhydro-N-acetylmuramate degradation. The protein operates within cell wall biogenesis; peptidoglycan recycling. In terms of biological role, catalyzes the specific phosphorylation of 1,6-anhydro-N-acetylmuramic acid (anhMurNAc) with the simultaneous cleavage of the 1,6-anhydro ring, generating MurNAc-6-P. Is required for the utilization of anhMurNAc either imported from the medium or derived from its own cell wall murein, and thus plays a role in cell wall recycling. The chain is Anhydro-N-acetylmuramic acid kinase from Cronobacter sakazakii (strain ATCC BAA-894) (Enterobacter sakazakii).